Consider the following 421-residue polypeptide: Subtilisin-like protease 2 (421 aa).

An N-terminal signal peptide occupies residues 1–16; sequence MQLLNFGLLLLPFVAG. Residues 17–122 constitute a propeptide that is removed on maturation; sequence DLAPQPEPLL…VHPDQHVYLA (106 aa). An Inhibitor I9 domain is found at 36-122; sequence QYIVTLKEGL…VHPDQHVYLA (87 aa). The 291-residue stretch at 131–421 folds into the Peptidase S8 domain; that stretch reads RWGLGYMSSK…ERKFTLPKYY (291 aa). Catalysis depends on charge relay system residues Asp-169 and His-201. 3 N-linked (GlcNAc...) asparagine glycosylation sites follow: Asn-248, Asn-261, and Asn-348. The active-site Charge relay system is the Ser-357. N-linked (GlcNAc...) asparagine glycosylation is present at Asn-388.

This sequence belongs to the peptidase S8 family.

Its subcellular location is the secreted. Its function is as follows. Secreted subtilisin-like serine protease with keratinolytic activity that contributes to pathogenicity. The sequence is that of Subtilisin-like protease 2 (SUB2) from Trichophyton verrucosum (strain HKI 0517).